The chain runs to 209 residues: Dual specificity protein phosphatase 22 (209 aa).

Positions 4–144 (GMNKILPSLF…LEDFGKHDVY (141 aa)) constitute a Tyrosine-protein phosphatase domain. Cysteine 88 functions as the Phosphocysteine intermediate in the catalytic mechanism. Positions 170-193 (DKHKQQEAAESQSATSSGRQWSSH) are disordered. A compositionally biased stretch (low complexity) spans 177-193 (AAESQSATSSGRQWSSH).

Belongs to the protein-tyrosine phosphatase family. Non-receptor class dual specificity subfamily.

It is found in the cytoplasm. The protein resides in the nucleus. The catalysed reaction is O-phospho-L-tyrosyl-[protein] + H2O = L-tyrosyl-[protein] + phosphate. It carries out the reaction O-phospho-L-seryl-[protein] + H2O = L-seryl-[protein] + phosphate. The enzyme catalyses O-phospho-L-threonyl-[protein] + H2O = L-threonyl-[protein] + phosphate. Activates the Jnk signaling pathway. Dephosphorylates and deactivates p38 and stress-activated protein kinase/c-Jun N-terminal kinase (SAPK/JNK). In Xenopus tropicalis (Western clawed frog), this protein is Dual specificity protein phosphatase 22 (dusp22).